A 316-amino-acid polypeptide reads, in one-letter code: Acetyl-coenzyme A carboxylase carboxyl transferase subunit beta (316 aa).

The CoA carboxyltransferase N-terminal domain occupies 39–308 (LWHKCSKCGV…PPHMVLWETM (270 aa)). Cys-43, Cys-46, Cys-62, and Cys-65 together coordinate Zn(2+). The C4-type zinc finger occupies 43 to 65 (CSKCGVLAYTKDLKANQMVCIEC).

The protein belongs to the AccD/PCCB family. Acetyl-CoA carboxylase is a heterohexamer composed of biotin carboxyl carrier protein (AccB), biotin carboxylase (AccC) and two subunits each of ACCase subunit alpha (AccA) and ACCase subunit beta (AccD). Zn(2+) serves as cofactor.

It is found in the cytoplasm. It carries out the reaction N(6)-carboxybiotinyl-L-lysyl-[protein] + acetyl-CoA = N(6)-biotinyl-L-lysyl-[protein] + malonyl-CoA. The protein operates within lipid metabolism; malonyl-CoA biosynthesis; malonyl-CoA from acetyl-CoA: step 1/1. Functionally, component of the acetyl coenzyme A carboxylase (ACC) complex. Biotin carboxylase (BC) catalyzes the carboxylation of biotin on its carrier protein (BCCP) and then the CO(2) group is transferred by the transcarboxylase to acetyl-CoA to form malonyl-CoA. This chain is Acetyl-coenzyme A carboxylase carboxyl transferase subunit beta, found in Nostoc punctiforme (strain ATCC 29133 / PCC 73102).